We begin with the raw amino-acid sequence, 417 residues long: Gamma-glutamyl phosphate reductase (417 aa).

Belongs to the gamma-glutamyl phosphate reductase family.

Its subcellular location is the cytoplasm. The catalysed reaction is L-glutamate 5-semialdehyde + phosphate + NADP(+) = L-glutamyl 5-phosphate + NADPH + H(+). Its pathway is amino-acid biosynthesis; L-proline biosynthesis; L-glutamate 5-semialdehyde from L-glutamate: step 2/2. In terms of biological role, catalyzes the NADPH-dependent reduction of L-glutamate 5-phosphate into L-glutamate 5-semialdehyde and phosphate. The product spontaneously undergoes cyclization to form 1-pyrroline-5-carboxylate. The sequence is that of Gamma-glutamyl phosphate reductase from Legionella pneumophila (strain Lens).